The primary structure comprises 131 residues: Anaerobic and virulence modulator AnvM (131 aa).

Functionally, plays an essential role by modulating the expression of hundreds of genes including quorum sensing system genes and oxidative stress resistance genes under both aerobic and anaerobic conditions. This Pseudomonas aeruginosa (strain ATCC 15692 / DSM 22644 / CIP 104116 / JCM 14847 / LMG 12228 / 1C / PRS 101 / PAO1) protein is Anaerobic and virulence modulator AnvM.